The chain runs to 219 residues: Chloramphenicol acetyltransferase (219 aa).

The active-site Proton acceptor is H193.

It belongs to the chloramphenicol acetyltransferase family. As to quaternary structure, homotrimer.

The enzyme catalyses chloramphenicol + acetyl-CoA = chloramphenicol 3-acetate + CoA. This enzyme is an effector of chloramphenicol resistance in bacteria. This Klebsiella sp protein is Chloramphenicol acetyltransferase (cat).